A 196-amino-acid polypeptide reads, in one-letter code: ATP-dependent Clp protease proteolytic subunit (196 aa).

The Nucleophile role is filled by S101. The active site involves H126.

It belongs to the peptidase S14 family. As to quaternary structure, component of the chloroplastic Clp protease core complex.

The protein localises to the plastid. The protein resides in the chloroplast stroma. It carries out the reaction Hydrolysis of proteins to small peptides in the presence of ATP and magnesium. alpha-casein is the usual test substrate. In the absence of ATP, only oligopeptides shorter than five residues are hydrolyzed (such as succinyl-Leu-Tyr-|-NHMec, and Leu-Tyr-Leu-|-Tyr-Trp, in which cleavage of the -Tyr-|-Leu- and -Tyr-|-Trp bonds also occurs).. Functionally, cleaves peptides in various proteins in a process that requires ATP hydrolysis. Has a chymotrypsin-like activity. Plays a major role in the degradation of misfolded proteins. In Populus trichocarpa (Western balsam poplar), this protein is ATP-dependent Clp protease proteolytic subunit.